Reading from the N-terminus, the 1379-residue chain is DNA-directed RNA polymerase subunit beta (1379 aa).

Belongs to the RNA polymerase beta chain family. In terms of assembly, the RNAP catalytic core consists of 2 alpha, 1 beta, 1 beta' and 1 omega subunit. When a sigma factor is associated with the core the holoenzyme is formed, which can initiate transcription.

The enzyme catalyses RNA(n) + a ribonucleoside 5'-triphosphate = RNA(n+1) + diphosphate. DNA-dependent RNA polymerase catalyzes the transcription of DNA into RNA using the four ribonucleoside triphosphates as substrates. The sequence is that of DNA-directed RNA polymerase subunit beta from Rhizobium leguminosarum bv. trifolii (strain WSM2304).